The primary structure comprises 576 residues: Arginine--tRNA ligase (576 aa).

The short motif at 126 to 136 (ANPTGPMHIGH) is the 'HIGH' region element.

This sequence belongs to the class-I aminoacyl-tRNA synthetase family. As to quaternary structure, monomer.

The protein resides in the cytoplasm. It carries out the reaction tRNA(Arg) + L-arginine + ATP = L-arginyl-tRNA(Arg) + AMP + diphosphate. The protein is Arginine--tRNA ligase of Rickettsia africae (strain ESF-5).